Reading from the N-terminus, the 375-residue chain is GDP-mannose-dependent alpha-mannosyltransferase (375 aa).

Belongs to the glycosyltransferase group 1 family. Glycosyltransferase 4 subfamily.

It participates in phospholipid metabolism; phosphatidylinositol metabolism. Its function is as follows. Catalyzes the addition of a mannose residue from GDP-D-mannose to GlcAGroAc2 to generate 1,2-di-O-C16/C18:1-(alpha-D-mannopyranosyl)-(1-4)-(alpha-D-glucopyranosyluronic acid)-(1-3)-glycerol(ManGlcAGroAc2). The protein is GDP-mannose-dependent alpha-mannosyltransferase (mgtA) of Mycolicibacterium smegmatis (strain ATCC 700084 / mc(2)155) (Mycobacterium smegmatis).